A 95-amino-acid chain; its full sequence is Putative membrane protein insertion efficiency factor (95 aa).

The protein belongs to the UPF0161 family.

The protein resides in the cell membrane. Could be involved in insertion of integral membrane proteins into the membrane. The sequence is that of Putative membrane protein insertion efficiency factor from Lactobacillus delbrueckii subsp. bulgaricus (strain ATCC 11842 / DSM 20081 / BCRC 10696 / JCM 1002 / NBRC 13953 / NCIMB 11778 / NCTC 12712 / WDCM 00102 / Lb 14).